Here is a 163-residue protein sequence, read N- to C-terminus: Halocyanin (163 aa).

Residues Met1 to Gly24 form the signal peptide. Residue Cys25 is modified to N-acetylcysteine. The S-archaeol cysteine moiety is linked to residue Cys25. The segment covering Asn26–Asn38 has biased composition (gly residues). The segment at Asn26–Ala48 is disordered. Residues Ala48–Glu163 enclose the Plastocyanin-like domain. The Cu cation site is built by His110, Cys148, His151, and Met156.

Its subcellular location is the cell membrane. In terms of biological role, electron donor. Binds one copper ion. The polypeptide is Halocyanin (hcy) (Natronomonas pharaonis (Natronobacterium pharaonis)).